The primary structure comprises 517 residues: NAD(P)H-quinone oxidoreductase subunit 2 (517 aa).

The next 14 helical transmembrane spans lie at 16–36 (ILPE…DLIF), 43–63 (WLPY…YLAW), 80–100 (LSIV…LMSI), 110–130 (LAEF…LCGA), 133–153 (LVMI…MTGY), 168–188 (LLIG…LYGL), 211–231 (LGLA…ISAV), 245–265 (PTPV…ALAI), 279–299 (WHFV…VVAL), 307–327 (MLAY…VAGT), 335–355 (VFYL…IILF), 379–399 (LALS…GFFG), 401–421 (IYLF…LGLV), and 467–487 (VGIV…NPLF).

Belongs to the complex I subunit 2 family. In terms of assembly, NDH-1 can be composed of about 15 different subunits; different subcomplexes with different compositions have been identified which probably have different functions.

The protein resides in the cellular thylakoid membrane. The enzyme catalyses a plastoquinone + NADH + (n+1) H(+)(in) = a plastoquinol + NAD(+) + n H(+)(out). It carries out the reaction a plastoquinone + NADPH + (n+1) H(+)(in) = a plastoquinol + NADP(+) + n H(+)(out). In terms of biological role, NDH-1 shuttles electrons from an unknown electron donor, via FMN and iron-sulfur (Fe-S) centers, to quinones in the respiratory and/or the photosynthetic chain. The immediate electron acceptor for the enzyme in this species is believed to be plastoquinone. Couples the redox reaction to proton translocation, and thus conserves the redox energy in a proton gradient. Cyanobacterial NDH-1 also plays a role in inorganic carbon-concentration. In Rippkaea orientalis (strain PCC 8801 / RF-1) (Cyanothece sp. (strain PCC 8801)), this protein is NAD(P)H-quinone oxidoreductase subunit 2.